Here is a 292-residue protein sequence, read N- to C-terminus: uncharacterized protein (292 aa).

Residues leucine 17, aspartate 55, asparagine 82, and lysine 115 each coordinate NADP(+). Catalysis depends on serine 134, which acts as the Proton donor. Residues tyrosine 148, lysine 152, and threonine 184 each contribute to the NADP(+) site. Tyrosine 148 serves as the catalytic Proton acceptor. Lysine 152 functions as the Lowers pKa of active site Tyr in the catalytic mechanism.

The protein belongs to the short-chain dehydrogenases/reductases (SDR) family.

The protein localises to the cytoplasm. This is an uncharacterized protein from Schizosaccharomyces pombe (strain 972 / ATCC 24843) (Fission yeast).